Consider the following 443-residue polypeptide: MHRSVPEQVSAELPATLEQFQITLGADVEDRVEECVREAARCLYRGAIVQCGALGELLIDYSWEKLNARNWREVGREWRAVYSYGCLFRAVGLCSVTGSIEEALQVCDIGLLMGAEIMDNLLGRIISVLQRIAPSREETKLEAERGVREPGLESSKLHSPGEHSNKKSFASVTGRKRIREGPEADFDPKGCSISEKVPCLLVPVLDSETAIPKLHCPSLEHFRDHYLVPQKPVVLEGVIDHWPCLKKWSVEYIQRVAGCRTVPVELGSRYTDAEWSQRLMTVNEFITKYILDKQNGIGYLAQHQLFEQIPELKEDICIPDYCCLGEASEDEITINAWFGPAGTVSPLHQDPQQNFLAQIVGRKYIRVYSVAETEKLYPFDSSILHNTSQVDVESPDQNKFPRFSQASYQECILSPGQVLFIPVKWWHYIRALDLSFSVSFWWS.

Residues 139-165 are compositionally biased toward basic and acidic residues; sequence TKLEAERGVREPGLESSKLHSPGEHSN. A disordered region spans residues 139–174; it reads TKLEAERGVREPGLESSKLHSPGEHSNKKSFASVTG. Positions 298–443 constitute a JmjC domain; that stretch reads GYLAQHQLFE…LSFSVSFWWS (146 aa). 3 residues coordinate Fe cation: histidine 348, aspartate 350, and histidine 427.

Requires Fe(2+) as cofactor.

The protein resides in the nucleus. It catalyses the reaction N(6),N(6)-dimethyl-L-lysyl(36)-[histone H3] + 2 2-oxoglutarate + 2 O2 = L-lysyl(36)-[histone H3] + 2 formaldehyde + 2 succinate + 2 CO2. Its function is as follows. Histone demethylase required for G2/M phase cell cycle progression. Specifically demethylates dimethylated 'Lys-36' (H3K36me2) of histone H3, an epigenetic repressive mark, thereby acting as a transcription activator. May play a role in the regulation of the circadian clock. This Xenopus tropicalis (Western clawed frog) protein is Lysine-specific demethylase 8 (kdm8).